A 131-amino-acid polypeptide reads, in one-letter code: Sec-independent protein translocase protein TatB (131 aa).

A helical membrane pass occupies residues 2–22 (LGSLSWEHMLVLVVVGLVVLG). The segment at 96-131 (AFDRPVNGAAAQPPPAPAPPPEPHRSGQTPFDADAT) is disordered. The segment covering 107–116 (QPPPAPAPPP) has biased composition (pro residues).

This sequence belongs to the TatB family. The Tat system comprises two distinct complexes: a TatABC complex, containing multiple copies of TatA, TatB and TatC subunits, and a separate TatA complex, containing only TatA subunits. Substrates initially bind to the TatABC complex, which probably triggers association of the separate TatA complex to form the active translocon.

The protein resides in the cell membrane. Functionally, part of the twin-arginine translocation (Tat) system that transports large folded proteins containing a characteristic twin-arginine motif in their signal peptide across membranes. Together with TatC, TatB is part of a receptor directly interacting with Tat signal peptides. TatB may form an oligomeric binding site that transiently accommodates folded Tat precursor proteins before their translocation. The chain is Sec-independent protein translocase protein TatB from Mycolicibacterium paratuberculosis (strain ATCC BAA-968 / K-10) (Mycobacterium paratuberculosis).